A 320-amino-acid chain; its full sequence is o-succinylbenzoate synthase (320 aa).

The active-site Proton donor is the Lys-133. Asp-161, Glu-190, and Asp-213 together coordinate Mg(2+). Residue Lys-235 is the Proton acceptor of the active site.

It belongs to the mandelate racemase/muconate lactonizing enzyme family. MenC type 1 subfamily. It depends on a divalent metal cation as a cofactor.

It catalyses the reaction (1R,6R)-6-hydroxy-2-succinyl-cyclohexa-2,4-diene-1-carboxylate = 2-succinylbenzoate + H2O. It functions in the pathway quinol/quinone metabolism; 1,4-dihydroxy-2-naphthoate biosynthesis; 1,4-dihydroxy-2-naphthoate from chorismate: step 4/7. The protein operates within quinol/quinone metabolism; menaquinone biosynthesis. Functionally, converts 2-succinyl-6-hydroxy-2,4-cyclohexadiene-1-carboxylate (SHCHC) to 2-succinylbenzoate (OSB). The protein is o-succinylbenzoate synthase of Salmonella choleraesuis (strain SC-B67).